The sequence spans 52 residues: Conotoxin-like peptide 2 (52 aa).

A signal peptide spans 1–18 (MKFSTILLLVCPTVALSA). Cystine bridges form between cysteine 24-cysteine 38, cysteine 31-cysteine 42, and cysteine 37-cysteine 49.

Its subcellular location is the secreted. The sequence is that of Conotoxin-like peptide 2 (CTL-2) from Orgyia pseudotsugata (Douglas-fir tussock moth).